A 179-amino-acid chain; its full sequence is Cytochrome b6-f complex iron-sulfur subunit 1 (179 aa).

A helical transmembrane segment spans residues 21–43 (LLTFGTVTGVALGALYPVVNYFI). Positions 61–162 (GNDVSVSKFL…AKTENDKIVL (102 aa)) constitute a Rieske domain. Cysteine 108, histidine 110, cysteine 126, and histidine 129 together coordinate [2Fe-2S] cluster. Cysteine 113 and cysteine 128 are oxidised to a cystine.

Belongs to the Rieske iron-sulfur protein family. As to quaternary structure, the 4 large subunits of the cytochrome b6-f complex are cytochrome b6, subunit IV (17 kDa polypeptide, PetD), cytochrome f and the Rieske protein, while the 4 small subunits are PetG, PetL, PetM and PetN. The complex functions as a dimer. The cofactor is [2Fe-2S] cluster.

Its subcellular location is the cellular thylakoid membrane. It carries out the reaction 2 oxidized [plastocyanin] + a plastoquinol + 2 H(+)(in) = 2 reduced [plastocyanin] + a plastoquinone + 4 H(+)(out). Component of the cytochrome b6-f complex, which mediates electron transfer between photosystem II (PSII) and photosystem I (PSI), cyclic electron flow around PSI, and state transitions. The polypeptide is Cytochrome b6-f complex iron-sulfur subunit 1 (Trichormus variabilis (strain ATCC 29413 / PCC 7937) (Anabaena variabilis)).